We begin with the raw amino-acid sequence, 230 residues long: RING finger protein 141 (230 aa).

The segment at 154–191 (ECCICMDGRVDLILPCAHSFCQKCIDKWSDRHRSCPVC) adopts an RING-type zinc-finger fold.

In Gallus gallus (Chicken), this protein is RING finger protein 141 (RNF141).